The primary structure comprises 206 residues: RNA-free ribonuclease P (206 aa).

A disordered region spans residues asparagine 187–glycine 206. Residues histidine 195 to glycine 206 show a composition bias toward pro residues.

It belongs to the HARP family.

The enzyme catalyses Endonucleolytic cleavage of RNA, removing 5'-extranucleotides from tRNA precursor.. In terms of biological role, RNA-free RNase P that catalyzes the removal of the 5'-leader sequence from pre-tRNA to produce the mature 5'-terminus. In Halorhodospira halophila (strain DSM 244 / SL1) (Ectothiorhodospira halophila (strain DSM 244 / SL1)), this protein is RNA-free ribonuclease P.